A 280-amino-acid chain; its full sequence is uncharacterized protein (280 aa).

Positions 1–21 (MRPVIKVGLSTASVYPLRAEA) are cleaved as a signal peptide.

To M.tuberculosis Rv0498 and S.coelicolor SCO3347.

This is an uncharacterized protein from Mycobacterium leprae (strain TN).